Reading from the N-terminus, the 142-residue chain is Serine protease inhibitor (142 aa).

At Ser1 the chain carries N-acetylserine.

In terms of biological role, serine protease inhibitor. Active against beta-trypsin and alpha-chymotrypsin with dissociation constants of 0.35 nM and 40 nM respectively. Inhibits factor XIa, but not other enzymes involved in coagulation and fibrinolysis. Does not inhibit subtilisin, lysyl endopeptidase, arginyl endopeptidase or papain. This is Serine protease inhibitor from Lentinula edodes (Shiitake mushroom).